We begin with the raw amino-acid sequence, 152 residues long: Nucleoside diphosphate kinase (152 aa).

6 residues coordinate ATP: Lys11, Phe59, Arg87, Thr93, Arg104, and Asn114. The Pros-phosphohistidine intermediate role is filled by His117.

It belongs to the NDK family. In terms of assembly, homotetramer. Requires Mg(2+) as cofactor.

It is found in the cytoplasm. It catalyses the reaction a 2'-deoxyribonucleoside 5'-diphosphate + ATP = a 2'-deoxyribonucleoside 5'-triphosphate + ADP. The catalysed reaction is a ribonucleoside 5'-diphosphate + ATP = a ribonucleoside 5'-triphosphate + ADP. Major role in the synthesis of nucleoside triphosphates other than ATP. The ATP gamma phosphate is transferred to the NDP beta phosphate via a ping-pong mechanism, using a phosphorylated active-site intermediate. The polypeptide is Nucleoside diphosphate kinase (Prochlorococcus marinus (strain MIT 9215)).